Consider the following 72-residue polypeptide: NAD(P)H-quinone oxidoreductase subunit O (72 aa).

This sequence belongs to the complex I NdhO subunit family. As to quaternary structure, NDH-1 can be composed of about 15 different subunits; different subcomplexes with different compositions have been identified which probably have different functions.

It is found in the cellular thylakoid membrane. It catalyses the reaction a plastoquinone + NADH + (n+1) H(+)(in) = a plastoquinol + NAD(+) + n H(+)(out). It carries out the reaction a plastoquinone + NADPH + (n+1) H(+)(in) = a plastoquinol + NADP(+) + n H(+)(out). Its function is as follows. NDH-1 shuttles electrons from an unknown electron donor, via FMN and iron-sulfur (Fe-S) centers, to quinones in the respiratory and/or the photosynthetic chain. The immediate electron acceptor for the enzyme in this species is believed to be plastoquinone. Couples the redox reaction to proton translocation, and thus conserves the redox energy in a proton gradient. Cyanobacterial NDH-1 also plays a role in inorganic carbon-concentration. This Gloeothece citriformis (strain PCC 7424) (Cyanothece sp. (strain PCC 7424)) protein is NAD(P)H-quinone oxidoreductase subunit O.